Consider the following 262-residue polypeptide: Dimeric xanthone biosynthesis cluster protein R11 (262 aa).

A hemerythrin-like region spans residues 69-160 (IADLLFYTKT…PQLFKHLNDE (92 aa)).

The protein operates within secondary metabolite biosynthesis. Its function is as follows. Part of the gene cluster that mediates the biosynthesis of the dimeric xanthones cryptosporioptides. The pathway begins with the synthesis of atrochrysone thioester by the polyketide synthase dmx-nrPKS. The atrochrysone carboxyl ACP thioesterase dmxR1 then breaks the thioester bond and releases the atrochrysone carboxylic acid from dmx-nrPKS. Atrochrysone carboxylic acid is decarboxylated by the decarboxylase dmxR15, and oxidized by the anthrone oxygenase dmxR16 to yield emodin. Emodin is then reduced to emodin hydroquinone by the oxidoreductase dmxR7. A-ring reduction by the short chain dehydrogenase dmxR18, dehydration by the scytalone dehydratase-like protein dmxR17 and probable spontaneous re-oxidation, results in overall deoxygenation to chrysophanol. Baeyer-Villiger oxidation by the Baeyer-Villiger monooxygenase (BVMO) dmxR6 then yields monodictylactone in equilibrium with monodictyphenone. In the case of the cryptosporioptides biosynthesis, monodictylactone is reduced at C-12 to an alcohol (by the short chain dehydrogenases dmxR12 or dmxR8) and hydroxylated at C-5 by dmxR9, yielding the electron-rich aromatic which could eliminate H(2)O to form the ortho-quinonemethide, followed by tautomerisation to paraquinone and complete the formal reduction to produce the 10-methylgroup. Conjugate addition of C-4a-OH to the resulting paraquinone by the monooxygenase dmxR10 then gives cyclohexadienone, which is then reduced at C-5 by the short chain dehydrogenase dmxR3 to give the dihydroxanthone. The 6,7-epoxide in the cryptosporioptides could be introduced by the cytochrome P450 monooxygenase dmxL3. The highly reducing PKS dmxL2 manufactures butyrate, which is further carboxylated by dmxL1 to form ethylmalonate. It is not yet clear whether the carboxylation occurs while the butyrate is attached to the ACP of dmxL2, but this unusual fungal metabolite could then be esterified to O-5 by the O-acetyltransferase dmxR13. Finally, dimerization performed by dmxR5 gives the observed dimers cryptosporioptides A, B and C as the final products of the pathway. The polypeptide is Dimeric xanthone biosynthesis cluster protein R11 (Cryptosporiopsis sp. (strain 8999)).